The chain runs to 171 residues: MDLKKKIREVPDFPREGINYKDISTLLLDGEAYRQAVQELARQCRYKAADLIVCPKLRGLVIGAPLSYILGTGLAVLQRPVRLPGDALSWQGMALGEDSFYLSREAVKPEMKVLVADELLATGGTAFTAIKMIEELGGEVVGTVFLIELTGLGGRAKLNDYDTISLVQYNF.

This sequence belongs to the purine/pyrimidine phosphoribosyltransferase family. In terms of assembly, homodimer.

The protein localises to the cytoplasm. The enzyme catalyses AMP + diphosphate = 5-phospho-alpha-D-ribose 1-diphosphate + adenine. It functions in the pathway purine metabolism; AMP biosynthesis via salvage pathway; AMP from adenine: step 1/1. In terms of biological role, catalyzes a salvage reaction resulting in the formation of AMP, that is energically less costly than de novo synthesis. The chain is Adenine phosphoribosyltransferase from Pelotomaculum thermopropionicum (strain DSM 13744 / JCM 10971 / SI).